The sequence spans 352 residues: Endophilin-A1 (352 aa).

A membrane-binding amphipathic helix region spans residues 1 to 21; sequence MSVAGLKKQFHKATQKVSEKV. The tract at residues 1–27 is disordered; that stretch reads MSVAGLKKQFHKATQKVSEKVGGAEGT. A binds and tubulates liposomes region spans residues 1 to 125; it reads MSVAGLKKQF…EVGEAMRELS (125 aa). A BAR domain is found at 18–249; it reads SEKVGGAEGT…LEERIRQASS (232 aa). Residues 60-87 form a required for dimerization upon membrane association region; sequence PNPASRAKLSMINTMSKIRGQEKGPGYP. Residues 181–248 adopt a coiled-coil conformation; that stretch reads EELRQALEKF…RLEERIRQAS (68 aa). Phosphoserine is present on serine 262. The segment at 264-289 is disordered; sequence EFATGDSTQPNGGLSHTGTPKPPGVQ. A compositionally biased stretch (polar residues) spans 268–281; sequence GDSTQPNGGLSHTG. Residues 290-349 form the SH3 domain; the sequence is MDQPCCRALYDFEPENEGELGFKEGDIITLTNQIDENWYEGMLHGQSGFFPINYVEILVA. At tyrosine 299 the chain carries Phosphotyrosine.

It belongs to the endophilin family. In terms of assembly, monomer; in cytoplasm. Homodimer; when associated with membranes. Interacts with SYNJ1. Interacts with DNM1. Interacts with MAP4K3; the interaction appears to regulate MAP4K3-mediated JNK activation. Interacts with OPHN1. Interacts with PDCD6IP. Interacts with BIN2. Interacts with ATXN2. Interacts with ADAM9 and ADAM15 cytoplasmic tails. Interacts with TMEM108. Interacts with ADGRB2.

The protein localises to the cytoplasm. The protein resides in the membrane. It localises to the early endosome. Its subcellular location is the presynapse. Its function is as follows. Implicated in synaptic vesicle endocytosis. May recruit other proteins to membranes with high curvature. Required for BDNF-dependent dendrite outgrowth. Cooperates with SH3GL2 to mediate BDNF-NTRK2 early endocytic trafficking and signaling from early endosomes. The chain is Endophilin-A1 (Sh3gl2) from Mus musculus (Mouse).